A 459-amino-acid chain; its full sequence is V-type ATP synthase beta chain (459 aa).

Belongs to the ATPase alpha/beta chains family.

Functionally, produces ATP from ADP in the presence of a proton gradient across the membrane. The V-type beta chain is a regulatory subunit. This Clostridium botulinum (strain Alaska E43 / Type E3) protein is V-type ATP synthase beta chain.